The following is a 348-amino-acid chain: Ferredoxin--NADP reductase 1 (348 aa).

Residues glutamate 36, lysine 44, tyrosine 48, isoleucine 88, proline 123, aspartate 285, and serine 326 each contribute to the FAD site. The tract at residues 329–348 (EKFKKKNEQLKQEKQAQLMN) is disordered.

It belongs to the ferredoxin--NADP reductase type 2 family. In terms of assembly, homodimer. The cofactor is FAD.

The enzyme catalyses 2 reduced [2Fe-2S]-[ferredoxin] + NADP(+) + H(+) = 2 oxidized [2Fe-2S]-[ferredoxin] + NADPH. The polypeptide is Ferredoxin--NADP reductase 1 (Shouchella clausii (strain KSM-K16) (Alkalihalobacillus clausii)).